A 1146-amino-acid polypeptide reads, in one-letter code: Killer toxin subunits alpha/beta (1146 aa).

The first 17 residues, 1 to 17 (MNIFYIFLFLLSFVQGL), serve as a signal peptide directing secretion. The propeptide occupies 18–29 (EHTHRRGSLVKR). 2 LysM domains span residues 205-234 (ADQSGINGESLQGYNPNLDFSKLSAGQPIC) and 254-303 (KTYK…NLCV). In terms of domain architecture, Chitin-binding type-1 spans 316-372 (IAECGPLAPGEKYNAKCPLNACCSEFGFCGLTKDYCDKKSSTTGAPGTDGCFSNCGY). Disulfide bonds link Cys-319-Cys-338, Cys-332-Cys-344, Cys-337-Cys-351, and Cys-366-Cys-370. The 353-residue stretch at 383–735 (FKKIAYWLDA…DDTEDPFDEE (353 aa)) folds into the GH18 domain. Residues Ile-424 and 447–450 (GGWD) contribute to the chitin site. The active-site Proton donor is Glu-495. Residues Tyr-496, 562 to 565 (MTYD), and Trp-707 contribute to the chitin site. N-linked (GlcNAc...) asparagine glycans are attached at residues Asn-771, Asn-858, Asn-868, Asn-876, and Asn-1117.

It belongs to the glycosyl hydrolase 18 family. In terms of assembly, the killer toxin is composed of three subunits: alpha, beta and gamma. Post-translationally, RF2 is potentially split by membrane-bound basic amino acid-specific peptidase to yield the alpha and beta subunits.

It catalyses the reaction Random endo-hydrolysis of N-acetyl-beta-D-glucosaminide (1-&gt;4)-beta-linkages in chitin and chitodextrins.. Functionally, the alpha subunit is a potent exochitinase. Along with the beta subunit it plays a role in the initial interaction of the toxin with sensitive cells and allow the gamma subunit (the active toxin) to gain entry into the cell. This Kluyveromyces lactis (strain ATCC 8585 / CBS 2359 / DSM 70799 / NBRC 1267 / NRRL Y-1140 / WM37) (Yeast) protein is Killer toxin subunits alpha/beta.